A 351-amino-acid chain; its full sequence is Transmembrane protein 255A (351 aa).

A run of 4 helical transmembrane segments spans residues 30–50 (IYVTVTLLIVSVLILTVGLAA), 57–77 (VTVGGYYPGVILGFGSFLGII), 89–109 (LVASIVFISFGVIAAFCCAIV), and 226–246 (TILNIVGLFLGIITAAVLGGF). The interval 302–331 (FPSSPPSGLSDEQEPQSPSPSPSYMWSSSA) is disordered.

This sequence belongs to the TMEM255 family.

It is found in the membrane. This Rattus norvegicus (Rat) protein is Transmembrane protein 255A (Tmem255a).